The sequence spans 390 residues: GTPase Obg (390 aa).

The 159-residue stretch at Met-1–Leu-159 folds into the Obg domain. Residues Asn-127–Gly-147 form a disordered region. Positions Arg-129–Thr-145 are enriched in polar residues. The 174-residue stretch at Ala-160–Ile-333 folds into the OBG-type G domain. Residues Gly-166–Ser-173, Phe-191–Val-195, Asp-213–Gly-216, Asn-283–Asp-286, and Ser-314–Ala-316 contribute to the GTP site. Mg(2+) contacts are provided by Ser-173 and Thr-193.

The protein belongs to the TRAFAC class OBG-HflX-like GTPase superfamily. OBG GTPase family. As to quaternary structure, monomer. Mg(2+) is required as a cofactor.

Its subcellular location is the cytoplasm. Functionally, an essential GTPase which binds GTP, GDP and possibly (p)ppGpp with moderate affinity, with high nucleotide exchange rates and a fairly low GTP hydrolysis rate. Plays a role in control of the cell cycle, stress response, ribosome biogenesis and in those bacteria that undergo differentiation, in morphogenesis control. In Escherichia coli (strain K12 / DH10B), this protein is GTPase Obg.